Here is a 174-residue protein sequence, read N- to C-terminus: MALNLEQKKAMVAEITDIANQAVSAVAADYRGLTVSEMSDLRKSAREARVHMRVYRNTLARRAFKETTYACLEEVLTGPIVLFFSQEEPGAAARLIEKFIKEHERLEVKGLALGGELLPAEKLKAVARLPSREEALSQLAAVLLAPVTKLVRTLNEPIAQVARVMAAVRDQKAA.

This sequence belongs to the universal ribosomal protein uL10 family. Part of the ribosomal stalk of the 50S ribosomal subunit. The N-terminus interacts with L11 and the large rRNA to form the base of the stalk. The C-terminus forms an elongated spine to which L12 dimers bind in a sequential fashion forming a multimeric L10(L12)X complex.

In terms of biological role, forms part of the ribosomal stalk, playing a central role in the interaction of the ribosome with GTP-bound translation factors. The sequence is that of Large ribosomal subunit protein uL10 from Coxiella burnetii (strain CbuK_Q154) (Coxiella burnetii (strain Q154)).